Reading from the N-terminus, the 261-residue chain is tRNA pseudouridine synthase A (261 aa).

The active-site Nucleophile is D51. Y109 is a substrate binding site.

It belongs to the tRNA pseudouridine synthase TruA family. Homodimer.

It catalyses the reaction uridine(38/39/40) in tRNA = pseudouridine(38/39/40) in tRNA. Its function is as follows. Formation of pseudouridine at positions 38, 39 and 40 in the anticodon stem and loop of transfer RNAs. This Shewanella sp. (strain ANA-3) protein is tRNA pseudouridine synthase A.